Consider the following 154-residue polypeptide: Probable archaeosortase D (154 aa).

Helical transmembrane passes span 6–26 (AIYI…LKML), 57–77 (IIEI…LGYI), 91–111 (YSVF…ILII), and 125–145 (VISF…IYLL). C64 acts as the Acyl-thioester intermediate in catalysis. R106 (proton donor) is an active-site residue.

Belongs to the exosortase/archaeosortase family. Archaeosortase D subfamily.

The protein resides in the cell membrane. Its function is as follows. Transpeptidase that recognizes and modifies its substrate by proteolytic cleavage of a sorting signal. Following cleavage, a covalent intermediate is formed via a thioester bond between the archaeosortase and its substrate, which is then transferred and covalently attached to the cell membrane. The polypeptide is Probable archaeosortase D (Methanocaldococcus jannaschii (strain ATCC 43067 / DSM 2661 / JAL-1 / JCM 10045 / NBRC 100440) (Methanococcus jannaschii)).